Consider the following 295-residue polypeptide: UDP-3-O-acyl-N-acetylglucosamine deacetylase (295 aa).

The Zn(2+) site is built by His-75, His-232, and Asp-236. The Proton donor role is filled by His-259.

The protein belongs to the LpxC family. The cofactor is Zn(2+).

The catalysed reaction is a UDP-3-O-[(3R)-3-hydroxyacyl]-N-acetyl-alpha-D-glucosamine + H2O = a UDP-3-O-[(3R)-3-hydroxyacyl]-alpha-D-glucosamine + acetate. It functions in the pathway glycolipid biosynthesis; lipid IV(A) biosynthesis; lipid IV(A) from (3R)-3-hydroxytetradecanoyl-[acyl-carrier-protein] and UDP-N-acetyl-alpha-D-glucosamine: step 2/6. Functionally, catalyzes the hydrolysis of UDP-3-O-myristoyl-N-acetylglucosamine to form UDP-3-O-myristoylglucosamine and acetate, the committed step in lipid A biosynthesis. This is UDP-3-O-acyl-N-acetylglucosamine deacetylase from Helicobacter pylori (strain ATCC 700392 / 26695) (Campylobacter pylori).